The primary structure comprises 812 residues: INO80 complex subunit D (812 aa).

Disordered stretches follow at residues Asn521 to Pro573 and Glu581 to Asp600. A compositionally biased stretch (basic residues) spans Lys524–Gln558. Residues Ile585–Thr595 are compositionally biased toward polar residues.

This sequence belongs to the INO80D family. Component of the chromatin-remodeling INO80 complex.

Its subcellular location is the nucleus. In terms of biological role, putative regulatory component of the chromatin remodeling INO80 complex which is involved in transcriptional regulation, DNA replication and probably DNA repair. This chain is INO80 complex subunit D, found in Xenopus laevis (African clawed frog).